The sequence spans 360 residues: Phospho-N-acetylmuramoyl-pentapeptide-transferase (360 aa).

The next 10 helical transmembrane spans lie at 21 to 41 (YLTLRVILGTLTALMLCLWLG), 73 to 93 (TMGGAMILIAIAVSTLLWGDL), 94 to 114 (TNHYVWLVLAVTLGFGAIGWV), 145 to 165 (AVTLYLTAASPVEVSLIVPLF), 168 to 188 (VVVPLGLFYIVLTYFVIVGSS), 199 to 219 (GLAIMPTVLVAMGLAIFAYAS), 236 to 256 (AGELAVFCGTIAGAGLGFLWF), 263 to 283 (VFMGDVGALALGAALGVVAVI), 288 to 308 (IVLFIMGGVFVMETVSVMLQV), and 339 to 359 (IVRFWIITVVLVLLGLATLKI).

Belongs to the glycosyltransferase 4 family. MraY subfamily. Requires Mg(2+) as cofactor.

It is found in the cell inner membrane. The enzyme catalyses UDP-N-acetyl-alpha-D-muramoyl-L-alanyl-gamma-D-glutamyl-meso-2,6-diaminopimeloyl-D-alanyl-D-alanine + di-trans,octa-cis-undecaprenyl phosphate = di-trans,octa-cis-undecaprenyl diphospho-N-acetyl-alpha-D-muramoyl-L-alanyl-D-glutamyl-meso-2,6-diaminopimeloyl-D-alanyl-D-alanine + UMP. The protein operates within cell wall biogenesis; peptidoglycan biosynthesis. Functionally, catalyzes the initial step of the lipid cycle reactions in the biosynthesis of the cell wall peptidoglycan: transfers peptidoglycan precursor phospho-MurNAc-pentapeptide from UDP-MurNAc-pentapeptide onto the lipid carrier undecaprenyl phosphate, yielding undecaprenyl-pyrophosphoryl-MurNAc-pentapeptide, known as lipid I. The sequence is that of Phospho-N-acetylmuramoyl-pentapeptide-transferase from Chromohalobacter salexigens (strain ATCC BAA-138 / DSM 3043 / CIP 106854 / NCIMB 13768 / 1H11).